The following is a 326-amino-acid chain: uncharacterized protein (326 aa).

The region spanning 15 to 76 (VRIEKFCLKL…IEPYLHNHSE (62 aa)) is the S4 RNA-binding domain. D147 is a catalytic residue.

Belongs to the pseudouridine synthase RluA family.

It catalyses the reaction a uridine in RNA = a pseudouridine in RNA. This is an uncharacterized protein from Mycoplasma pneumoniae (strain ATCC 29342 / M129 / Subtype 1) (Mycoplasmoides pneumoniae).